The chain runs to 302 residues: Glycine--tRNA ligase alpha subunit (302 aa).

Belongs to the class-II aminoacyl-tRNA synthetase family. In terms of assembly, tetramer of two alpha and two beta subunits.

The protein localises to the cytoplasm. It catalyses the reaction tRNA(Gly) + glycine + ATP = glycyl-tRNA(Gly) + AMP + diphosphate. In Edwardsiella ictaluri (strain 93-146), this protein is Glycine--tRNA ligase alpha subunit.